We begin with the raw amino-acid sequence, 254 residues long: Alcohol dehydrogenase (254 aa).

At Met-1 the chain carries N-acetylmethionine. Position 10–33 (10–33 (FVAALGGIGLDTSRELVKRNLKNF)) interacts with NAD(+). Position 138 (Ser-138) interacts with substrate. Residue Tyr-151 is the Proton acceptor of the active site.

The protein belongs to the short-chain dehydrogenases/reductases (SDR) family. In terms of assembly, homodimer.

The catalysed reaction is a primary alcohol + NAD(+) = an aldehyde + NADH + H(+). It catalyses the reaction a secondary alcohol + NAD(+) = a ketone + NADH + H(+). The chain is Alcohol dehydrogenase (Adh) from Drosophila lebanonensis (Fruit fly).